Here is a 5146-residue protein sequence, read N- to C-terminus: SCO-spondin (5146 aa).

Positions 1–17 (MLLPALLFGAAWALANG) are cleaved as a signal peptide. The EMI domain maps to 18–94 (RWCEQTETVL…ACCPGWGGTH (77 aa)). N-linked (GlcNAc...) asparagine glycosylation is found at asparagine 80, asparagine 122, and asparagine 153. In terms of domain architecture, VWFD 1 spans 185–356 (ATCATWSGFH…RLPDSELGCL (172 aa)). Cystine bridges form between cysteine 187–cysteine 317, cysteine 209–cysteine 355, and cysteine 231–cysteine 237. Asparagine 255 is a glycosylation site (N-linked (GlcNAc...) asparagine). The TIL 1 domain maps to 464 to 519 (CPGGQLYSDCASACPPSCSAVGEGSEWSCGEECVSGCECPPGLFWDGALCVPAARC). Residues 557–730 (AECAVGGDGH…FQVAGGGTCS (174 aa)) form the VWFD 2 domain. Cystine bridges form between cysteine 559–cysteine 692 and cysteine 583–cysteine 729. Asparagine 814 carries N-linked (GlcNAc...) asparagine glycosylation. The region spanning 822–875 (CPGGQEYQECAPACDRNCGEPEDCGELDNCVAGCNCPLGLLWDPEGQCVPPNLC) is the TIL 2 domain. Residue asparagine 906 is glycosylated (N-linked (GlcNAc...) asparagine). Residues 1008-1178 (GRCRASGAPH…HSWRLGPLCP (171 aa)) enclose the VWFD 3 domain. 3 disulfide bridges follow: cysteine 1010/cysteine 1142, cysteine 1032/cysteine 1177, and cysteine 1053/cysteine 1060. Residues 1271–1327 (CERGQVYEACGPTCPATCHDHRPEPGWPCRAVACVEGCFCPEGTLLHGGVCLEPAAC) form the TIL 3 domain. A glycan (N-linked (GlcNAc...) asparagine) is linked at asparagine 1349. LDL-receptor class A domains follow at residues 1372–1409 (GCAE…EGCA), 1412–1447 (VCGE…EQGC), 1448–1484 (PCPQ…ESCL), 1488–1526 (DCAP…GHCP), 1561–1597 (PCGP…SGCD), and 1599–1638 (PCAP…GACE). Disulfide bonds link cysteine 1373-cysteine 1386, cysteine 1380-cysteine 1399, cysteine 1393-cysteine 1408, cysteine 1413-cysteine 1425, cysteine 1420-cysteine 1438, cysteine 1432-cysteine 1447, cysteine 1449-cysteine 1461, cysteine 1456-cysteine 1474, cysteine 1468-cysteine 1483, cysteine 1489-cysteine 1501, cysteine 1496-cysteine 1514, cysteine 1508-cysteine 1525, cysteine 1562-cysteine 1574, cysteine 1569-cysteine 1587, cysteine 1581-cysteine 1596, cysteine 1600-cysteine 1613, cysteine 1607-cysteine 1626, and cysteine 1620-cysteine 1637. Asparagine 1647 is a glycosylation site (N-linked (GlcNAc...) asparagine). In terms of domain architecture, LDL-receptor class A 7 spans 1652-1690 (PCPEYSCPDGLCIGFQQVCDGQPDCELAGTAGPSPEEQG). 2 consecutive TSP type-1 domains span residues 1691-1745 (CGAW…AACP) and 1747-1805 (DGVW…DGCP). 3 disulfide bridges follow: cysteine 1703-cysteine 1739, cysteine 1707-cysteine 1744, and cysteine 1718-cysteine 1729. Asparagine 1806 is a glycosylation site (N-linked (GlcNAc...) asparagine). In terms of domain architecture, TIL 4 spans 1809–1865 (CSGELVFHACVPCPLTCDDISGQATCPPDRPCGGPGCWCPAGQVLGAQGRCVWPRQC). EGF-like domains follow at residues 1821–1860 (CPLT…GRCV) and 1861–1898 (WPRQ…RRCQ). Residues 1906–1962 (NCGWSAWSPWAECLGPCGSRSVQWSFRSPNNPRPAGRGHQCRGLHRKARRCQTEPCE) enclose the TSP type-1 3 domain. Cystine bridges form between cysteine 1907/cysteine 1946, cysteine 1918/cysteine 1922, and cysteine 1956/cysteine 1961. Residues 1962 to 2022 (EGCEQDGRVH…GVGESCCHCV (61 aa)) form the VWFC 1 domain. 2 N-linked (GlcNAc...) asparagine glycosylation sites follow: asparagine 2027 and asparagine 2127. Disulfide bonds link cysteine 2062–cysteine 2220, cysteine 2226–cysteine 2238, cysteine 2233–cysteine 2251, and cysteine 2245–cysteine 2260. The F5/8 type C domain occupies 2062-2220 (CYSPLGLARL…GPLRVELLGC (159 aa)). The LDL-receptor class A 8 domain occupies 2225–2261 (LCLGVGHRCVSGECAPRGAPCDGVEDCKDGSDEEGCV). Positions 2262 to 2346 (TPPAGAGRIE…TPTSQPEAQA (85 aa)) are disordered. Polar residues-rich tracts occupy residues 2273-2284 (TAWSSAPSSAQP) and 2331-2343 (GSVQ…SQPE). 2 LDL-receptor class A domains span residues 2382-2418 (QCSP…RPCA) and 2442-2478 (LCSP…NGCV). Cystine bridges form between cysteine 2383–cysteine 2395, cysteine 2390–cysteine 2408, cysteine 2402–cysteine 2417, cysteine 2443–cysteine 2455, cysteine 2450–cysteine 2468, cysteine 2462–cysteine 2477, cysteine 2480–cysteine 2516, cysteine 2491–cysteine 2495, cysteine 2526–cysteine 2531, cysteine 2546–cysteine 2583, cysteine 2550–cysteine 2588, and cysteine 2561–cysteine 2573. TSP type-1 domains are found at residues 2479-2532 (DCGL…QACP) and 2534-2589 (AGAW…QPCA). The TIL 5 domain maps to 2611 to 2654 (VPPCPPSCLDPEANRSCSGLCLEGCRCPPGLLLQDAGCLPLSEC). Asparagine 2624 and asparagine 2673 each carry an N-linked (GlcNAc...) asparagine glycan. 3 consecutive TSP type-1 domains span residues 2694 to 2748 (PCGW…SACG), 2751 to 2807 (VPGW…PVCL), and 2809 to 2862 (LGVW…QPCT). Disulfide bonds link cysteine 2695–cysteine 2733, cysteine 2706–cysteine 2710, cysteine 2743–cysteine 2747, cysteine 2763–cysteine 2801, cysteine 2767–cysteine 2806, cysteine 2783–cysteine 2791, cysteine 2821–cysteine 2856, cysteine 2825–cysteine 2861, and cysteine 2836–cysteine 2846. Residues asparagine 2915 and asparagine 2946 are each glycosylated (N-linked (GlcNAc...) asparagine). 2 consecutive TSP type-1 domains span residues 2964–3019 (ACGW…RPCG) and 3020–3071 (GPAG…GVCP). 3 cysteine pairs are disulfide-bonded: cysteine 2965–cysteine 3003, cysteine 2976–cysteine 2980, and cysteine 3013–cysteine 3018. Asparagine 3041 carries an N-linked (GlcNAc...) asparagine glycan. The TIL 6 domain maps to 3070–3122 (CPPGKRWLDCAQGPASCAELSAPRGADQPCHPGCYCPSGMLLLNNACVPTQDC). N-linked (GlcNAc...) asparagine glycans are attached at residues asparagine 3143 and asparagine 3153. 2 consecutive TSP type-1 domains span residues 3163-3230 (QPTW…PECD) and 3232-3287 (AGGW…LPCP). Intrachain disulfides connect cysteine 3175-cysteine 3224, cysteine 3179-cysteine 3229, cysteine 3190-cysteine 3214, cysteine 3244-cysteine 3281, cysteine 3248-cysteine 3286, and cysteine 3259-cysteine 3271. A glycan (N-linked (GlcNAc...) asparagine) is linked at asparagine 3290. Residues 3295–3345 (EGAEYSACGPPCPRSCDDLVHCVWHCQPGCYCPPGQVLSADGTVHVQPGHC) form the TIL 7 domain. TSP type-1 domains are found at residues 3388–3450 (PGAW…PECP) and 3452–3507 (DGAW…TQCT). Cystine bridges form between cysteine 3400/cysteine 3443, cysteine 3404/cysteine 3449, cysteine 3415/cysteine 3427, cysteine 3464/cysteine 3499, cysteine 3467/cysteine 3506, and cysteine 3477/cysteine 3489. Residues asparagine 3502, asparagine 3580, and asparagine 3607 are each glycosylated (N-linked (GlcNAc...) asparagine). Residues 3626–3674 (LGLWGSWGPWEDCSVSCGGGEQLRFRRCPRPPCPGPARQSRTCRTQVCR) form the TSP type-1 15 domain. 3 disulfides stabilise this stretch: cysteine 3638–cysteine 3668, cysteine 3642–cysteine 3673, and cysteine 3653–cysteine 3658. The N-linked (GlcNAc...) asparagine glycan is linked to asparagine 3783. 4 TSP type-1 domains span residues 3802–3858 (AGGF…PECP), 3872–3924 (PGGW…PSCT), 3938–3994 (NCSW…RACP), and 3996–4051 (PGGW…TPCE). Disulfide bonds link cysteine 3814–cysteine 3852, cysteine 3818–cysteine 3857, and cysteine 3830–cysteine 3842. N-linked (GlcNAc...) asparagine glycosylation is found at asparagine 3906 and asparagine 3938. 6 disulfide bridges follow: cysteine 3939-cysteine 3975, cysteine 3950-cysteine 3954, cysteine 3988-cysteine 3993, cysteine 4008-cysteine 4045, cysteine 4012-cysteine 4050, and cysteine 4023-cysteine 4035. A TIL 8 domain is found at 4054 to 4109 (CPAGMEVVSCANRCPRRCSDLQEGIVCQEDQACQQGCRCPEGSLEQDGGCVPLGHC). The 68-residue stretch at 4101 to 4168 (GGCVPLGHCE…AWSPCSRSCG (68 aa)) folds into the VWFC 2 domain. An N-linked (GlcNAc...) asparagine glycan is attached at asparagine 4131. TSP type-1 domains follow at residues 4151-4204 (HCAW…SPCP), 4245-4300 (LGAW…WPCP), 4302-4358 (LPDT…GPCL), and 4360-4414 (ECVW…GNCS). 6 disulfide bridges follow: cysteine 4152/cysteine 4188, cysteine 4163/cysteine 4167, cysteine 4198/cysteine 4203, cysteine 4257/cysteine 4294, cysteine 4261/cysteine 4299, and cysteine 4272/cysteine 4284. An N-linked (GlcNAc...) asparagine glycan is attached at asparagine 4341. Disulfide bonds link cysteine 4361–cysteine 4398, cysteine 4372–cysteine 4374, and cysteine 4408–cysteine 4413. Asparagine 4412 is a glycosylation site (N-linked (GlcNAc...) asparagine). A TIL 9 domain is found at 4418–4473 (CAPPFEFQACGSPCTGLCATYLSPWLCQDLPPCQPGCYCPEGLLEQAGGCVPPEQC). In terms of domain architecture, TSP type-1 24 spans 4610–4661 (LCQWGPWGAWSPCQVPCSGGFRLRWREAGIPPGGGCRGPWAQTESCNMGPCP). Disulfide bonds link cysteine 4611–cysteine 4645, cysteine 4622–cysteine 4626, and cysteine 4655–cysteine 4660. The TIL 10 domain occupies 4675-4721 (DCANQCPRSCVDLWDRVECLQGPCRPGCRCPPGQLVQDGHCVPVSSC). Residues asparagine 4729, asparagine 4746, asparagine 4751, and asparagine 4772 are each glycosylated (N-linked (GlcNAc...) asparagine). The region spanning 4761-4814 (CPTLGPWSAWSNCSAPCGGGTTKRHRSCKEGPGVTPCQAQDMEQQQDCNLQPCP) is the TSP type-1 25 domain. Disulfide bonds link cysteine 4773/cysteine 4808, cysteine 4777/cysteine 4813, and cysteine 4788/cysteine 4797. Positions 4816 to 4870 (CPPGQVLSACAVSCPRLCSHLQPGTPCMQEPCQLGCDCPRGQLLHNGTCVPPAEC) constitute a TIL 11 domain. Asparagine 4861, asparagine 4901, asparagine 4947, and asparagine 4954 each carry an N-linked (GlcNAc...) asparagine glycan. The 59-residue stretch at 4983–5041 (CECWHHGRPHPPGSEWQKACESCRCVSGESICTQHCPPLTCAQGETAVQEPGGCCPTCR) folds into the VWFC 3 domain. 4 cysteine pairs are disulfide-bonded: cysteine 5052–cysteine 5100, cysteine 5066–cysteine 5117, cysteine 5076–cysteine 5133, and cysteine 5080–cysteine 5135. Residues 5052-5139 (CRHLTELRNL…IHSCQCSACQ (88 aa)) enclose the CTCK domain. Residue asparagine 5060 is glycosylated (N-linked (GlcNAc...) asparagine).

It belongs to the thrombospondin family. In terms of tissue distribution, subcommissural organ. Located at the boundary of the diencephalon and mesencephalon beneath the posterior commissure at the point where the axons cross the midline.

It is found in the secreted. It localises to the extracellular space. Its function is as follows. Involved in the modulation of neuronal aggregation. May be involved in developmental events during the formation of the central nervous system. The protein is SCO-spondin (SSPO) of Bos taurus (Bovine).